Consider the following 226-residue polypeptide: 2-C-methyl-D-erythritol 4-phosphate cytidylyltransferase (226 aa).

It belongs to the IspD/TarI cytidylyltransferase family. IspD subfamily.

It carries out the reaction 2-C-methyl-D-erythritol 4-phosphate + CTP + H(+) = 4-CDP-2-C-methyl-D-erythritol + diphosphate. The protein operates within isoprenoid biosynthesis; isopentenyl diphosphate biosynthesis via DXP pathway; isopentenyl diphosphate from 1-deoxy-D-xylulose 5-phosphate: step 2/6. Its function is as follows. Catalyzes the formation of 4-diphosphocytidyl-2-C-methyl-D-erythritol from CTP and 2-C-methyl-D-erythritol 4-phosphate (MEP). The protein is 2-C-methyl-D-erythritol 4-phosphate cytidylyltransferase of Trichodesmium erythraeum (strain IMS101).